A 126-amino-acid polypeptide reads, in one-letter code: Aspartate 1-decarboxylase (126 aa).

Residue serine 25 is the Schiff-base intermediate with substrate; via pyruvic acid of the active site. Residue serine 25 is modified to Pyruvic acid (Ser). Threonine 57 is a substrate binding site. The active-site Proton donor is the tyrosine 58. 72 to 74 (GAA) contributes to the substrate binding site.

Belongs to the PanD family. As to quaternary structure, heterooctamer of four alpha and four beta subunits. Requires pyruvate as cofactor. Is synthesized initially as an inactive proenzyme, which is activated by self-cleavage at a specific serine bond to produce a beta-subunit with a hydroxyl group at its C-terminus and an alpha-subunit with a pyruvoyl group at its N-terminus.

Its subcellular location is the cytoplasm. It catalyses the reaction L-aspartate + H(+) = beta-alanine + CO2. Its pathway is cofactor biosynthesis; (R)-pantothenate biosynthesis; beta-alanine from L-aspartate: step 1/1. Functionally, catalyzes the pyruvoyl-dependent decarboxylation of aspartate to produce beta-alanine. The polypeptide is Aspartate 1-decarboxylase (Campylobacter jejuni subsp. jejuni serotype O:23/36 (strain 81-176)).